A 323-amino-acid chain; its full sequence is Aldo-keto reductase family 1 member C1 (323 aa).

Residues 20 to 24 (GFGTY) and Asp50 each bind NADP(+). Residue Tyr24 participates in substrate binding. The Proton donor role is filled by Tyr55. His117 serves as a coordination point for substrate. Residues 166–167 (SN), Gln190, and 216–222 (YSALGSH) each bind NADP(+). Residues His222 and Trp227 each contribute to the substrate site. 270 to 280 (KSYNEQRIRQN) lines the NADP(+) pocket.

This sequence belongs to the aldo/keto reductase family. Monomer.

The protein resides in the cytoplasm. It is found in the cytosol. The catalysed reaction is a 3alpha-hydroxysteroid + NADP(+) = a 3-oxosteroid + NADPH + H(+). The enzyme catalyses a 3alpha-hydroxysteroid + NAD(+) = a 3-oxosteroid + NADH + H(+). It catalyses the reaction (17R,20S)-17,20-dihydroxypregn-4-en-3-one + NADP(+) = 17alpha-hydroxyprogesterone + NADPH + H(+). It carries out the reaction (17R,20S)-17,20-dihydroxypregn-4-en-3-one + NAD(+) = 17alpha-hydroxyprogesterone + NADH + H(+). The catalysed reaction is (20S)-hydroxypregn-4-en-3-one + NADP(+) = progesterone + NADPH + H(+). The enzyme catalyses (20S)-hydroxypregn-4-en-3-one + NAD(+) = progesterone + NADH + H(+). It catalyses the reaction (1R,2R)-1,2-dihydrobenzene-1,2-diol + NADP(+) = catechol + NADPH + H(+). It carries out the reaction (S)-indan-1-ol + NAD(+) = indan-1-one + NADH + H(+). The catalysed reaction is (S)-indan-1-ol + NADP(+) = indan-1-one + NADPH + H(+). The enzyme catalyses 5alpha-androstane-3alpha,17beta-diol + NADP(+) = 17beta-hydroxy-5alpha-androstan-3-one + NADPH + H(+). It catalyses the reaction 5alpha-androstane-3beta,17beta-diol + NADP(+) = 17beta-hydroxy-5alpha-androstan-3-one + NADPH + H(+). It carries out the reaction 5alpha-androstane-3alpha,17beta-diol + NAD(+) = 17beta-hydroxy-5alpha-androstan-3-one + NADH + H(+). The catalysed reaction is 17beta-hydroxy-5alpha-androstan-3-one + NADP(+) = 5alpha-androstan-3,17-dione + NADPH + H(+). The enzyme catalyses androsterone + NADP(+) = 5alpha-androstan-3,17-dione + NADPH + H(+). It catalyses the reaction androsterone + NADPH + H(+) = 5alpha-androstane-3alpha,17beta-diol + NADP(+). It carries out the reaction 5alpha-androstane-3alpha,17beta-diol + NAD(+) = androsterone + NADH + H(+). The catalysed reaction is 17beta-estradiol + NADP(+) = estrone + NADPH + H(+). The enzyme catalyses 17beta-estradiol + NAD(+) = estrone + NADH + H(+). It catalyses the reaction testosterone + NADP(+) = androst-4-ene-3,17-dione + NADPH + H(+). It carries out the reaction 20alpha-hydroxy-5beta-pregnan-3-one + NADP(+) = 5beta-pregnan-3,20-dione + NADPH + H(+). The catalysed reaction is 3beta-hydroxy-5beta-pregnane-20-one + NADP(+) = 5beta-pregnan-3,20-dione + NADPH + H(+). The enzyme catalyses 3beta-hydroxy-5beta-pregnane-20-one + NADPH + H(+) = 3beta,20alpha-dihydroxy-5beta-pregnane + NADP(+). It catalyses the reaction (3beta,5alpha,17beta)-3-hydroxyandrostan-17-yl sulfate + NADP(+) = 5alpha-dihydrotestosterone sulfate + NADPH + H(+). The protein operates within steroid metabolism. Its function is as follows. Cytosolic aldo-keto reductase that catalyzes the NADH and NADPH-dependent reduction of ketosteroids to hydroxysteroids. Most probably acts as a reductase in vivo since the oxidase activity measured in vitro is inhibited by physiological concentrations of NADPH. Displays a broad positional specificity acting on positions 3, 17 and 20 of steroids and regulates the metabolism of hormones like estrogens and androgens. May also reduce conjugated steroids such as 5alpha-dihydrotestosterone sulfate. Displays affinity for bile acids. This is Aldo-keto reductase family 1 member C1 (AKR1C1) from Pongo abelii (Sumatran orangutan).